We begin with the raw amino-acid sequence, 782 residues long: ATP-dependent 6-phosphofructokinase, muscle type (782 aa).

An N-acetylthreonine modification is found at T2. The interval 2–390 is N-terminal catalytic PFK domain 1; it reads THEEHHAAKT…NWEVYKLLAH (389 aa). ATP contacts are provided by residues G25, 88–89, and 118–121; these read RC and GDGS. Position 119 (D119) interacts with Mg(2+). S133 is modified (phosphoserine). Substrate-binding positions include 164–166, R201, 208–210, E264, R292, and 298–301; these read SID, MGR, and HVQR. The active-site Proton acceptor is D166. A Phosphoserine modification is found at S377. Positions 391 to 403 are interdomain linker; the sequence is IRPPVSKTSATMH. The tract at residues 404 to 782 is C-terminal regulatory PFK domain 2; it reads TVAVMNVGAP…SRKRSGETSI (379 aa). Beta-D-fructose 2,6-bisphosphate contacts are provided by residues R473 and 530–534; that span reads TVSNN. S532 carries O-linked (GlcNAc) serine glycosylation. K559 bears the N6-(2-hydroxyisobutyryl)lysine mark. Beta-D-fructose 2,6-bisphosphate contacts are provided by residues R568, 575–577, E631, R657, and 663–666; these read MGG and HMQQ. A Phosphoserine modification is found at S669. Position 737 (R737) interacts with beta-D-fructose 2,6-bisphosphate. A Phosphoserine modification is found at S777.

This sequence belongs to the phosphofructokinase type A (PFKA) family. ATP-dependent PFK group I subfamily. Eukaryotic two domain clade 'E' sub-subfamily. As to quaternary structure, homo- and heterotetramers. Phosphofructokinase (PFK) enzyme functions as a tetramer composed of different combinations of 3 types of subunits, called PFKM (M), PFKL (L) and PFKP (P). The composition of the PFK tetramer differs according to the tissue type it is present in. The kinetic and regulatory properties of the tetrameric enzyme are dependent on the subunit composition, hence can vary across tissues. Interacts (via C-terminus) with HK1 (via N-terminal spermatogenic cell-specific region). Mg(2+) is required as a cofactor. In terms of processing, glcNAcylation decreases enzyme activity.

It localises to the cytoplasm. The enzyme catalyses beta-D-fructose 6-phosphate + ATP = beta-D-fructose 1,6-bisphosphate + ADP + H(+). The protein operates within carbohydrate degradation; glycolysis; D-glyceraldehyde 3-phosphate and glycerone phosphate from D-glucose: step 3/4. With respect to regulation, allosterically activated by ADP, AMP, or fructose 2,6-bisphosphate, and allosterically inhibited by ATP or citrate. Functionally, catalyzes the phosphorylation of D-fructose 6-phosphate to fructose 1,6-bisphosphate by ATP, the first committing step of glycolysis. In Canis lupus familiaris (Dog), this protein is ATP-dependent 6-phosphofructokinase, muscle type (PFKM).